Here is a 319-residue protein sequence, read N- to C-terminus: Beta-ketoacyl-[acyl-carrier-protein] synthase III (319 aa).

Active-site residues include Cys112 and His246. The ACP-binding stretch occupies residues 247–251; that stretch reads QANFR. Asn276 is an active-site residue.

The protein belongs to the thiolase-like superfamily. FabH family. In terms of assembly, homodimer.

It localises to the cytoplasm. It carries out the reaction malonyl-[ACP] + acetyl-CoA + H(+) = 3-oxobutanoyl-[ACP] + CO2 + CoA. It functions in the pathway lipid metabolism; fatty acid biosynthesis. Catalyzes the condensation reaction of fatty acid synthesis by the addition to an acyl acceptor of two carbons from malonyl-ACP. Catalyzes the first condensation reaction which initiates fatty acid synthesis and may therefore play a role in governing the total rate of fatty acid production. Possesses both acetoacetyl-ACP synthase and acetyl transacylase activities. Its substrate specificity determines the biosynthesis of branched-chain and/or straight-chain of fatty acids. The chain is Beta-ketoacyl-[acyl-carrier-protein] synthase III from Shewanella oneidensis (strain ATCC 700550 / JCM 31522 / CIP 106686 / LMG 19005 / NCIMB 14063 / MR-1).